Consider the following 778-residue polypeptide: Probable dipeptidyl peptidase 4 (778 aa).

The first 18 residues, 1–18 (MKTSQFLSLLLLAGIAQA), serve as a signal peptide directing secretion. N-linked (GlcNAc...) asparagine glycans are attached at residues N84, N114, and N222. Catalysis depends on charge relay system residues S616, D693, and H728.

It belongs to the peptidase S9B family.

It is found in the secreted. It catalyses the reaction Release of an N-terminal dipeptide, Xaa-Yaa-|-Zaa-, from a polypeptide, preferentially when Yaa is Pro, provided Zaa is neither Pro nor hydroxyproline.. Extracellular dipeptidyl-peptidase which removes N-terminal dipeptides sequentially from polypeptides having unsubstituted N-termini provided that the penultimate residue is proline. Contributes to pathogenicity. The sequence is that of Probable dipeptidyl peptidase 4 (DPP4) from Arthroderma benhamiae (strain ATCC MYA-4681 / CBS 112371) (Trichophyton mentagrophytes).